A 332-amino-acid polypeptide reads, in one-letter code: C4-dicarboxylate-binding periplasmic protein DctP (332 aa).

An N-terminal signal peptide occupies residues 1 to 22 (MFKPLTLIAASILAVTSFNAAA).

Belongs to the bacterial solute-binding protein 7 family. As to quaternary structure, the complex comprises the extracytoplasmic solute receptor protein DctP, and the two transmembrane proteins DctQ and DctM.

Its subcellular location is the periplasm. In terms of biological role, part of the tripartite ATP-independent periplasmic (TRAP) transport system DctPQM involved in C4-dicarboxylates uptake. The sequence is that of C4-dicarboxylate-binding periplasmic protein DctP from Vibrio cholerae serotype O1 (strain ATCC 39315 / El Tor Inaba N16961).